The following is a 343-amino-acid chain: Cytoplasmic tRNA 2-thiolation protein 1 (343 aa).

It belongs to the TtcA family. CTU1/NCS6/ATPBD3 subfamily.

The protein resides in the cytoplasm. The protein operates within tRNA modification; 5-methoxycarbonylmethyl-2-thiouridine-tRNA biosynthesis. Its function is as follows. Plays a central role in 2-thiolation of mcm(5)S(2)U at tRNA wobble positions of tRNA(Lys), tRNA(Glu) and tRNA(Gln). Directly binds tRNAs and probably acts by catalyzing adenylation of tRNAs, an intermediate required for 2-thiolation. It is unclear whether it acts as a sulfurtransferase that transfers sulfur from thiocarboxylated URM1 onto the uridine of tRNAs at wobble position. This chain is Cytoplasmic tRNA 2-thiolation protein 1, found in Drosophila yakuba (Fruit fly).